Consider the following 359-residue polypeptide: GTP 3',8-cyclase (359 aa).

One can recognise a Radical SAM core domain in the interval 33 to 260 (RFGRRHDSLR…PTGRENPSAP (228 aa)). Residue R42 coordinates GTP. Residues C49 and C53 each coordinate [4Fe-4S] cluster. An S-adenosyl-L-methionine-binding site is contributed by Y55. C56 is a [4Fe-4S] cluster binding site. Residue R93 participates in GTP binding. G97 is a binding site for S-adenosyl-L-methionine. T124 lines the GTP pocket. S148 is a binding site for S-adenosyl-L-methionine. K185 lines the GTP pocket. M219 provides a ligand contact to S-adenosyl-L-methionine. Residues C286 and C289 each coordinate [4Fe-4S] cluster. Residue 291-293 (RLR) coordinates GTP. C303 provides a ligand contact to [4Fe-4S] cluster.

This sequence belongs to the radical SAM superfamily. MoaA family. Monomer and homodimer. [4Fe-4S] cluster serves as cofactor.

The enzyme catalyses GTP + AH2 + S-adenosyl-L-methionine = (8S)-3',8-cyclo-7,8-dihydroguanosine 5'-triphosphate + 5'-deoxyadenosine + L-methionine + A + H(+). It functions in the pathway cofactor biosynthesis; molybdopterin biosynthesis. Its function is as follows. Catalyzes the cyclization of GTP to (8S)-3',8-cyclo-7,8-dihydroguanosine 5'-triphosphate. The protein is GTP 3',8-cyclase of Rhodopirellula baltica (strain DSM 10527 / NCIMB 13988 / SH1).